We begin with the raw amino-acid sequence, 44 residues long: Photosystem I reaction center subunit IX (44 aa).

A helical transmembrane segment spans residues 7–27; it reads YLSVAPVISTLWFGSLAGLLI.

This sequence belongs to the PsaJ family.

It is found in the plastid. The protein localises to the chloroplast thylakoid membrane. Functionally, may help in the organization of the PsaE and PsaF subunits. In Populus alba (White poplar), this protein is Photosystem I reaction center subunit IX.